Here is a 413-residue protein sequence, read N- to C-terminus: Chloramphenicol resistance protein CraA (413 aa).

Transmembrane regions (helical) follow at residues 18–38 (LMFPLALVLFEFAVYIGNDLI), 55–75 (WAPSSMSFYLLGGASVAWLLG), 84–104 (KKVLLSGVLFFALCCFLILLT), 110–130 (FLTLRFLQGIGLSVISAVGYA), 147–167 (LMANISLLAPLLGPVLGAFLI), 170–190 (VSWHWGFVAIALLALLSWVGL), 228–248 (ALPLVGMPLMLWIALSPIILV), 260–280 (LAQFPVFLGLIVGNIVLIKII), 289–309 (VLIGLPIMLTGTLILILGVVW), 312–332 (YLIPCLLIGMTLICFGEGISF), 349–369 (TVAAAVSMLLMTSFFAMIELV), and 373–393 (YTQFHLWAFVLSAFAFIALWF).

It belongs to the major facilitator superfamily.

It is found in the cell inner membrane. Its function is as follows. Efflux pump that mediates resistance to chloramphenicol. In Acinetobacter baumannii (strain ATCC 19606 / DSM 30007 / JCM 6841 / CCUG 19606 / CIP 70.34 / NBRC 109757 / NCIMB 12457 / NCTC 12156 / 81), this protein is Chloramphenicol resistance protein CraA.